Consider the following 353-residue polypeptide: UPF0324 membrane protein PP_3661 (353 aa).

The next 8 membrane-spanning stretches (helical) occupy residues 20–42 (LNGI…MPAI), 70–92 (ASWA…AFFG), 105–127 (WSGL…WCGM), 137–159 (ALLT…ESAL), 166–188 (SAMA…PLAI), 234–253 (MTRV…WISR), 266–288 (IAMP…QVLP), and 326–348 (ALAT…TLGV).

It belongs to the UPF0324 family.

It localises to the cell membrane. The chain is UPF0324 membrane protein PP_3661 from Pseudomonas putida (strain ATCC 47054 / DSM 6125 / CFBP 8728 / NCIMB 11950 / KT2440).